Here is a 322-residue protein sequence, read N- to C-terminus: Ribosomal RNA small subunit methyltransferase H (322 aa).

Residues 40–42 (GGH), Asp-60, Phe-84, Asp-106, and Gln-113 each bind S-adenosyl-L-methionine.

This sequence belongs to the methyltransferase superfamily. RsmH family.

Its subcellular location is the cytoplasm. The enzyme catalyses cytidine(1402) in 16S rRNA + S-adenosyl-L-methionine = N(4)-methylcytidine(1402) in 16S rRNA + S-adenosyl-L-homocysteine + H(+). Its function is as follows. Specifically methylates the N4 position of cytidine in position 1402 (C1402) of 16S rRNA. This chain is Ribosomal RNA small subunit methyltransferase H, found in Aggregatibacter aphrophilus (strain NJ8700) (Haemophilus aphrophilus).